A 173-amino-acid polypeptide reads, in one-letter code: Disulfide bond formation protein B (173 aa).

Residues 1-11 are Cytoplasmic-facing; the sequence is MNALQWSFRAQ. Residues 12–28 traverse the membrane as a helical segment; the sequence is CLTGFLFCTGLLAYAIF. Topologically, residues 29-46 are periplasmic; the sequence is LQLHQGLEPCPLCIFQRI. An intrachain disulfide couples cysteine 38 to cysteine 41. Residues 47 to 63 form a helical membrane-spanning segment; that stretch reads AFAVLGILFLIAGLYNS. Residues 64–70 lie on the Cytoplasmic side of the membrane; that stretch reads SNVYTRK. Residues 71–88 form a helical membrane-spanning segment; the sequence is AYGLLIFLTAAIGTGIAG. The Periplasmic portion of the chain corresponds to 89–145; the sequence is RHVWVQLMPHNTISSCGSPLSFLSETMGPFEVFRTVLTGTSDCGNIDWRFLGLSMPM. Cysteine 104 and cysteine 131 are disulfide-bonded. Residues 146-164 traverse the membrane as a helical segment; the sequence is WSMFWFVALALLGLLVGFK. At 165–173 the chain is on the cytoplasmic side; that stretch reads AERRKPLFS.

The protein belongs to the DsbB family.

The protein resides in the cell inner membrane. Required for disulfide bond formation in some periplasmic proteins. Acts by oxidizing the DsbA protein. The chain is Disulfide bond formation protein B from Xylella fastidiosa (strain 9a5c).